Reading from the N-terminus, the 535-residue chain is Heparanase (535 aa).

The N-terminal stretch at 1-27 (MLRLLLLWLWGPLGALAQGAPAGTAPT) is a signal peptide. Heparan sulfate group contacts are provided by residues 54–56 (DAS) and Thr-89. The propeptide at 102–149 (PTSEERSYWKSQVNHDICRSEPVSAAVLRKLQVEWPFQELLLLREQYQ) is linker peptide. A disulfide bridge connects residues Cys-119 and Cys-171. 150–154 (KEFKN) lines the heparan sulfate group pocket. Asn-192 and Asn-209 each carry an N-linked (GlcNAc...) asparagine glycan. Glu-217 acts as the Proton donor in catalysis. Heparan sulfate group contacts are provided by residues 262-272 (QPRGKTVKLLR), His-288, and Arg-295. The required for heterodimerization with the heparanase 8 kDa subunit stretch occupies residues 280-409 (EVIDSLTWHH…LLFKKLVGPR (130 aa)). Catalysis depends on Glu-335, which acts as the Nucleophile. Heparan sulfate group is bound by residues 340-342 (YGG) and 381-383 (GNY). Cys-429 and Cys-534 are disulfide-bonded. The N-linked (GlcNAc...) asparagine glycan is linked to Asn-451. Residues 519–535 (FSYGFFVIRNAKIAACI) are required for transferring proheparanase to the Golgi apparatus, secretion and subsequent enzyme activity and for enhancement of PKB/AKT1 phosphorylation.

This sequence belongs to the glycosyl hydrolase 79 family. Heterodimer; heterodimer formation between the 8 kDa and the 50 kDa subunits is required for enzyme activity. Interacts with TF; the interaction, inhibited by heparin, enhances the generation of activated factor X and activates coagulation. Interacts with HRG; the interaction is enhanced at acidic pH, partially inhibits binding of HPSE to cell surface receptors and modulates its enzymatic activity. Interacts with SDC1; the interaction enhances the shedding of SDC1. Interacts with HPSE2. Post-translationally, proteolytically processed. The cleavage of the 65 kDa form leads to the generation of a linker peptide, and the 8 kDa and 50 kDa products. The active form, the 8/50 kDa heterodimer, is resistant to degradation. Complete removal of the linker peptide appears to be a prerequisite to the complete activation of the enzyme. N-glycosylated. Glycosylation of the 50 kDa subunit appears to be essential for its solubility. In terms of tissue distribution, expressed in skin, mainly in the stratum granulosum and the first layer of the stratum corneum in the upper part of the epidermis. Also detected in hair follicles and in sebaceous glands.

It is found in the lysosome membrane. The protein localises to the secreted. Its subcellular location is the nucleus. The catalysed reaction is endohydrolysis of (1-&gt;4)-beta-D-glycosidic bonds of heparan sulfate chains in heparan sulfate proteoglycan.. Its activity is regulated as follows. Inhibited by EDTA and activated by calcium and magnesium. Inhibited by laminarin sulfate and, to a lower extent, by heparin and sulfamin. Its function is as follows. Endoglycosidase that cleaves heparan sulfate proteoglycans (HSPGs) into heparan sulfate side chains and core proteoglycans. Participates in extracellular matrix (ECM) degradation and remodeling. Selectively cleaves the linkage between a glucuronic acid unit and an N-sulfo glucosamine unit carrying either a 3-O-sulfo or a 6-O-sulfo group. Can also cleave the linkage between a glucuronic acid unit and an N-sulfo glucosamine unit carrying a 2-O-sulfo group, but not linkages between a glucuronic acid unit and a 2-O-sulfated iduronic acid moiety. It is essentially inactive at neutral pH but becomes active under acidic conditions such as during tumor invasion and in inflammatory processes. Facilitates cell migration associated with metastasis, wound healing and inflammation. Enhances shedding of syndecans, and increases endothelial invasion and angiogenesis in myelomas. Acts as a procoagulant by increasing the generation of activation factor X in the presence of tissue factor and activation factor VII. Increases cell adhesion to the extracellular matrix (ECM), independent of its enzymatic activity. Induces AKT1/PKB phosphorylation via lipid rafts increasing cell mobility and invasion. Heparin increases this AKT1/PKB activation. Regulates osteogenesis. Enhances angiogenesis through up-regulation of SRC-mediated activation of VEGF. Implicated in hair follicle inner root sheath differentiation and hair homeostasis. The polypeptide is Heparanase (Hpse) (Mus musculus (Mouse)).